Here is a 316-residue protein sequence, read N- to C-terminus: Apolipoprotein E (316 aa).

A signal peptide spans 1–18 (MKALWAVLVVTLLAGCLA). Repeat copies occupy residues 76–97 (VLMEDTMTELKAYKKELEEQLG), 98–119 (PMAEETRARLAKEVQAAQSRLG), 120–141 (ADMEDLRNRLAQYRNEVHTMLG), 142–163 (QSTEELRARLSTHLRKLRKRLM), 164–185 (RDAEDLQKRLAVYKAGAREGAE), 186–207 (RGVGAIRERLGPLVEQGRQRTA), 208–229 (NLGAGAGKPLQDRAQALGARIR), and 230–251 (GRLEEVGNQARDRLEEMREQME). The 8 X 22 AA approximate tandem repeats stretch occupies residues 76-251 (VLMEDTMTEL…RLEEMREQME (176 aa)). Residue M139 is modified to Methionine sulfoxide. Position 143 is a phosphoserine (S143). The LDL and other lipoprotein receptors binding stretch occupies residues 154–164 (HLRKLRKRLMR). Residue 158–161 (LRKR) coordinates heparin. The lipid-binding and lipoprotein association stretch occupies residues 206 to 286 (TANLGAGAGK…GWFEPLVEDM (81 aa)). Heparin is bound at residue 225-232 (GARIRGRL). The interval 262 to 316 (QQMRLQAEIFQARLKGWFEPLVEDMQRQWANLVEKIQASVAANPIPPSSVPQESP) is homooligomerization. The interval 274-286 (RLKGWFEPLVEDM) is specificity for association with VLDL.

It belongs to the apolipoprotein A1/A4/E family. As to quaternary structure, homotetramer. May interact with ABCA1; functionally associated with ABCA1 in the biogenesis of HDLs. May interact with APP/A4 amyloid-beta peptide; the interaction is extremely stable in vitro but its physiological significance is unclear. May interact with MAPT. May interact with MAP2. In the cerebrospinal fluid, interacts with secreted SORL1. Interacts with PMEL; this allows the loading of PMEL luminal fragment on ILVs to induce fibril nucleation. Post-translationally, APOE exists as multiple glycosylated and sialylated glycoforms within cells and in plasma. The extent of glycosylation and sialylation are tissue and context specific. In terms of processing, glycated in plasma VLDL. Phosphorylated by FAM20C in the extracellular medium.

The protein resides in the secreted. The protein localises to the extracellular space. It localises to the extracellular matrix. It is found in the extracellular vesicle. Its subcellular location is the endosome. The protein resides in the multivesicular body. Functionally, APOE is an apolipoprotein, a protein associating with lipid particles, that mainly functions in lipoprotein-mediated lipid transport between organs via the plasma and interstitial fluids. APOE is a core component of plasma lipoproteins and is involved in their production, conversion and clearance. Apolipoproteins are amphipathic molecules that interact both with lipids of the lipoprotein particle core and the aqueous environment of the plasma. As such, APOE associates with chylomicrons, chylomicron remnants, very low density lipoproteins (VLDL) and intermediate density lipoproteins (IDL) but shows a preferential binding to high-density lipoproteins (HDL). It also binds a wide range of cellular receptors including the LDL receptor/LDLR, the LDL receptor-related proteins LRP1, LRP2 and LRP8 and the very low-density lipoprotein receptor/VLDLR that mediate the cellular uptake of the APOE-containing lipoprotein particles. Finally, APOE also has a heparin-binding activity and binds heparan-sulfate proteoglycans on the surface of cells, a property that supports the capture and the receptor-mediated uptake of APOE-containing lipoproteins by cells. A main function of APOE is to mediate lipoprotein clearance through the uptake of chylomicrons, VLDLs, and HDLs by hepatocytes. APOE is also involved in the biosynthesis by the liver of VLDLs as well as their uptake by peripheral tissues ensuring the delivery of triglycerides and energy storage in muscle, heart and adipose tissues. By participating in the lipoprotein-mediated distribution of lipids among tissues, APOE plays a critical role in plasma and tissues lipid homeostasis. APOE is also involved in two steps of reverse cholesterol transport, the HDLs-mediated transport of cholesterol from peripheral tissues to the liver, and thereby plays an important role in cholesterol homeostasis. First, it is functionally associated with ABCA1 in the biogenesis of HDLs in tissues. Second, it is enriched in circulating HDLs and mediates their uptake by hepatocytes. APOE also plays an important role in lipid transport in the central nervous system, regulating neuron survival and sprouting. The chain is Apolipoprotein E (Apoe) from Peromyscus leucopus (White-footed mouse).